A 568-amino-acid polypeptide reads, in one-letter code: DNA mismatch repair protein MutL (568 aa).

Belongs to the DNA mismatch repair MutL/HexB family.

This protein is involved in the repair of mismatches in DNA. It is required for dam-dependent methyl-directed DNA mismatch repair. May act as a 'molecular matchmaker', a protein that promotes the formation of a stable complex between two or more DNA-binding proteins in an ATP-dependent manner without itself being part of a final effector complex. The protein is DNA mismatch repair protein MutL of Nostoc punctiforme (strain ATCC 29133 / PCC 73102).